A 968-amino-acid chain; its full sequence is Alanine--tRNA ligase, cytoplasmic (968 aa).

At methionine 1 the chain carries N-acetylmethionine. A Phosphoserine modification is found at serine 3. The residue at position 19 (lysine 19) is an N6-acetyllysine. Residues arginine 77, histidine 95, tryptophan 176, and 214–216 (IWN) each bind ATP. 2 residues coordinate L-alanine: asparagine 216 and aspartate 239. Position 243 (glycine 243) interacts with ATP. Residues serine 399 and serine 555 each carry the phosphoserine modification. Zn(2+)-binding residues include histidine 605, histidine 609, cysteine 723, and histidine 727. The Nuclear localization signal motif lies at 750 to 763 (RRIVAVTGAEAQKA). Lysine 876 bears the N6-acetyllysine mark. Position 943 is an N6,N6,N6-trimethyllysine; alternate (lysine 943). Lysine 943 bears the N6,N6-dimethyllysine; alternate mark. The residue at position 943 (lysine 943) is an N6-methyllysine; alternate.

The protein belongs to the class-II aminoacyl-tRNA synthetase family. In terms of assembly, monomer. Interacts with ANKRD16; the interaction is direct. Zn(2+) is required as a cofactor. ISGylated. In terms of processing, methylation at 'Lys-943' by METTL21C.

The protein resides in the cytoplasm. The protein localises to the nucleus. It catalyses the reaction tRNA(Ala) + L-alanine + ATP = L-alanyl-tRNA(Ala) + AMP + diphosphate. The enzyme catalyses (S)-lactate + ATP + H(+) = (S)-lactoyl-AMP + diphosphate. It carries out the reaction (S)-lactoyl-AMP + L-lysyl-[protein] = N(6)-[(S)-lactoyl]-L-lysyl-[protein] + AMP + 2 H(+). With respect to regulation, the protein lactyltransferase activity is inhibited by beta-alanine. In terms of biological role, catalyzes the attachment of alanine to tRNA(Ala) in a two-step reaction: alanine is first activated by ATP to form Ala-AMP and then transferred to the acceptor end of tRNA(Ala). Also edits incorrectly charged tRNA(Ala) via its editing domain. In presence of high levels of lactate, also acts as a protein lactyltransferase that mediates lactylation of lysine residues in target proteins, such as TEAD1, TP53/p53 and YAP1. Protein lactylation takes place in a two-step reaction: lactate is first activated by ATP to form lactate-AMP and then transferred to lysine residues of target proteins. Acts as an inhibitor of TP53/p53 activity by catalyzing lactylation of TP53/p53. Acts as a positive regulator of the Hippo pathway by mediating lactylation of TEAD1 and YAP1. The polypeptide is Alanine--tRNA ligase, cytoplasmic (Aars1) (Rattus norvegicus (Rat)).